The chain runs to 487 residues: L-tartrate/succinate antiporter (487 aa).

14 consecutive transmembrane segments (helical) span residues 10-30 (YLAPLAVIAIIALIPVPAGLE), 33-53 (TWLYFAVFTGVIVGLILEPVP), 54-74 (GAVVAMVGISIIAILSPWLLF), 93-113 (WAVFGFSNSVIWLIFAAFMFG), 137-157 (TLFLGYAVMFSELILAPVTPS), 189-209 (IGSYIMWMGIVADCVTSAIFL), 236-256 (FLGMLPLSILLVLLVPWLAYV), 292-312 (LMVGALVLWIFGGDYIDAAMV), 313-333 (GYSVVALMLLLRIISWDDIVS), 340-360 (VFFWLASLITLATGLNNTGFI), 370-390 (SLSGYSPTMVMVALIVVFYLL), 393-413 (FFASATAYTSALAPMMIAAAL), 418-438 (IPLPVFCLMVGAAIGLGSILT), and 465-485 (IFGLIFLVLLVITGLLWMPVV).

This sequence belongs to the SLC13A/DASS transporter (TC 2.A.47) family. DIT1 subfamily.

It localises to the cell inner membrane. The catalysed reaction is (2R,3R)-tartrate(out) + succinate(in) = (2R,3R)-tartrate(in) + succinate(out). Catalyzes the uptake of tartrate in exchange for intracellular succinate. Essential for anaerobic L-tartrate fermentation. This Shigella boydii serotype 4 (strain Sb227) protein is L-tartrate/succinate antiporter (ttdT).